The chain runs to 216 residues: Adenylate kinase (216 aa).

10 to 15 (GAGKGT) is an ATP binding site. Positions 30–59 (STGDIFRKNISEKTPLGVKAKEYMDKGQLV) are NMP. Residues threonine 31, arginine 36, 57–59 (QLV), 85–88 (GFPR), and glutamine 92 each bind AMP. The LID stretch occupies residues 126–163 (GRRVCPSCGASYHIKFNPPKIEGLCDVCKKEVIQRKDD). Arginine 127 serves as a coordination point for ATP. Residues cysteine 130 and cysteine 133 each contribute to the Zn(2+) site. ATP is bound at residue 136-137 (SY). Positions 150 and 153 each coordinate Zn(2+). The AMP site is built by arginine 160 and arginine 171. Glutamine 199 is a binding site for ATP.

This sequence belongs to the adenylate kinase family. Monomer.

It is found in the cytoplasm. It carries out the reaction AMP + ATP = 2 ADP. It functions in the pathway purine metabolism; AMP biosynthesis via salvage pathway; AMP from ADP: step 1/1. In terms of biological role, catalyzes the reversible transfer of the terminal phosphate group between ATP and AMP. Plays an important role in cellular energy homeostasis and in adenine nucleotide metabolism. This chain is Adenylate kinase, found in Clostridium novyi (strain NT).